Here is a 357-residue protein sequence, read N- to C-terminus: Peptide chain release factor 1 (357 aa).

Gln-232 bears the N5-methylglutamine mark. Positions 284–304 are enriched in basic and acidic residues; it reads AERAAERKGQIGSGDRSERIR. The tract at residues 284–308 is disordered; it reads AERAAERKGQIGSGDRSERIRTYNY.

This sequence belongs to the prokaryotic/mitochondrial release factor family. In terms of processing, methylated by PrmC. Methylation increases the termination efficiency of RF1.

It is found in the cytoplasm. Its function is as follows. Peptide chain release factor 1 directs the termination of translation in response to the peptide chain termination codons UAG and UAA. The protein is Peptide chain release factor 1 of Maricaulis maris (strain MCS10) (Caulobacter maris).